The primary structure comprises 205 residues: Guanylate kinase (205 aa).

The Guanylate kinase-like domain maps to 6–185 (GLLIVLSRPS…ACDRIKAIVV (180 aa)). 13-20 (RPSGVGKG) provides a ligand contact to ATP.

It belongs to the guanylate kinase family.

It localises to the cytoplasm. The catalysed reaction is GMP + ATP = GDP + ADP. Its function is as follows. Essential for recycling GMP and indirectly, cGMP. The protein is Guanylate kinase of Bacillus cereus (strain ATCC 14579 / DSM 31 / CCUG 7414 / JCM 2152 / NBRC 15305 / NCIMB 9373 / NCTC 2599 / NRRL B-3711).